The primary structure comprises 335 residues: Pregnancy-specific beta-1-glycoprotein 11 (335 aa).

A signal peptide spans 1-34; it reads MGPLSAPPCTEHIKWKGLLLTALLLNFWNLPTTA. Positions 35–144 constitute an Ig-like V-type domain; it reads QVMIEAQPPK…TGYFTFTLYL (110 aa). 3 N-linked (GlcNAc...) asparagine glycosylation sites follow: Asn61, Asn104, and Asn111. The short motif at 127–129 is the Cell attachment site element; that stretch reads RGD. 2 consecutive Ig-like C2-type domains span residues 147-234 and 242-317; these read PKPS…VTLN and PRIF…TSLT. 2 cysteine pairs are disulfide-bonded: Cys169–Cys217 and Cys261–Cys301.

It belongs to the immunoglobulin superfamily. CEA family.

The protein resides in the secreted. The polypeptide is Pregnancy-specific beta-1-glycoprotein 11 (PSG11) (Homo sapiens (Human)).